A 213-amino-acid chain; its full sequence is Ferric nitrobindin-like protein (213 aa).

Residues 17-42 are disordered; it reads VNLAAEQSKSTSDKNLPEFGDMPIPD. The GXWXGXG signature appears at 65 to 71; the sequence is GVWRGQG.

This sequence belongs to the nitrobindin family.

The sequence is that of Ferric nitrobindin-like protein from Corynebacterium jeikeium (strain K411).